The chain runs to 61 residues: Photosystem II reaction center protein Z (61 aa).

2 helical membrane passes run 8–28 and 41–61; these read ALLV…VLFS and LVGS…SFFK.

The protein belongs to the PsbZ family. In terms of assembly, PSII is composed of 1 copy each of membrane proteins PsbA, PsbB, PsbC, PsbD, PsbE, PsbF, PsbH, PsbI, PsbJ, PsbK, PsbL, PsbM, PsbT, PsbX, PsbY, PsbZ, Psb30/Ycf12, peripheral proteins PsbO, CyanoQ (PsbQ), PsbU, PsbV and a large number of cofactors. It forms dimeric complexes.

Its subcellular location is the cellular thylakoid membrane. Its function is as follows. May control the interaction of photosystem II (PSII) cores with the light-harvesting antenna, regulates electron flow through the 2 photosystem reaction centers. PSII is a light-driven water plastoquinone oxidoreductase, using light energy to abstract electrons from H(2)O, generating a proton gradient subsequently used for ATP formation. This chain is Photosystem II reaction center protein Z, found in Synechococcus sp. (strain JA-3-3Ab) (Cyanobacteria bacterium Yellowstone A-Prime).